The primary structure comprises 159 residues: Afifavidin (159 aa).

Residues 1 to 23 (MRRLASLAVALPLLAVVASPALA) form the signal peptide. The region spanning 36 to 151 (GVPAVSSSWV…GSDTFTLVNK (116 aa)) is the Avidin-like domain. Positions 46, 50, 66, 68, and 74 each coordinate biotin. Cys75 and Cys104 form a disulfide bridge. Biotin is bound by residues Ser106, Thr108, and Asp144.

This sequence belongs to the avidin/streptavidin family. As to quaternary structure, exhibits a dynamic oligomeric assembly: the apo form self-assembles mostly into toroid-shaped homooctamers, with a small fraction of homodimers, yet upon biotin binding the intact afifavidin consists solely of the dimer.

The protein resides in the secreted. Functionally, the exact role played by afifavidin is still obscure. Forms a strong non-covalent complex with biotin and 2-iminobiotin. This Afifella pfennigii (Rhodobium pfennigii) protein is Afifavidin.